The following is a 64-amino-acid chain: uncharacterized protein (64 aa).

2 helical membrane-spanning segments follow: residues isoleucine 4–tyrosine 24 and methionine 35–methionine 55.

It localises to the cell membrane. This is an uncharacterized protein from Bacillus subtilis (strain 168).